A 443-amino-acid chain; its full sequence is C4-dicarboxylate transport protein (443 aa).

A run of 7 helical transmembrane segments spans residues 7-26 (SLYVQVIIAIVLGILVGALF), 46-63 (MVIAPIIFATVVSGVAHM), 76-98 (ALIYFEVVSTLALIIGMVVMNVL), 140-162 (LVSAFTGGELLPVLLVALLFGFA), 183-205 (VVFVILGFIMRLAPIGAFGAMAF), 218-240 (LGYLMGSFYLTCLLFIFVVLGLI), and 350-372 (FITLAATLGAVGHVPVAGMALIL). A disordered region spans residues 415–443 (GEDLPTTEPDVASEERGEGREIDSSRPVT). Over residues 427–443 (SEERGEGREIDSSRPVT) the composition is skewed to basic and acidic residues.

This sequence belongs to the dicarboxylate/amino acid:cation symporter (DAACS) (TC 2.A.23) family.

The protein localises to the cell membrane. Responsible for the transport of dicarboxylates such as succinate, fumarate, and malate across the membrane. This Deinococcus radiodurans (strain ATCC 13939 / DSM 20539 / JCM 16871 / CCUG 27074 / LMG 4051 / NBRC 15346 / NCIMB 9279 / VKM B-1422 / R1) protein is C4-dicarboxylate transport protein (dctA).